A 511-amino-acid polypeptide reads, in one-letter code: ATP synthase subunit alpha (511 aa).

Residue 169-176 (GDRQTGKT) participates in ATP binding.

It belongs to the ATPase alpha/beta chains family. As to quaternary structure, F-type ATPases have 2 components, CF(1) - the catalytic core - and CF(0) - the membrane proton channel. CF(1) has five subunits: alpha(3), beta(3), gamma(1), delta(1), epsilon(1). CF(0) has three main subunits: a(1), b(2) and c(9-12). The alpha and beta chains form an alternating ring which encloses part of the gamma chain. CF(1) is attached to CF(0) by a central stalk formed by the gamma and epsilon chains, while a peripheral stalk is formed by the delta and b chains.

The protein resides in the cell inner membrane. It carries out the reaction ATP + H2O + 4 H(+)(in) = ADP + phosphate + 5 H(+)(out). In terms of biological role, produces ATP from ADP in the presence of a proton gradient across the membrane. The alpha chain is a regulatory subunit. The protein is ATP synthase subunit alpha of Bartonella henselae (strain ATCC 49882 / DSM 28221 / CCUG 30454 / Houston 1) (Rochalimaea henselae).